A 148-amino-acid polypeptide reads, in one-letter code: Gastrin-releasing peptide (148 aa).

An N-terminal signal peptide occupies residues 1-23 (MRGRELPLVLLALVLCLAPRGRA). The residue at position 50 (methionine 50) is a Methionine amide. A propeptide spanning residues 54 to 148 (STGESSSVSE…EGRNPQLNQQ (95 aa)) is cleaved from the precursor. The tract at residues 89 to 148 (EAKENRNHQPPQPKALGNQQPSWDSEDSSNFKDVGSKGKVGRLSAPGSQREGRNPQLNQQ) is disordered.

It belongs to the bombesin/neuromedin-B/ranatensin family.

The protein resides in the secreted. It is found in the cytoplasmic vesicle. The protein localises to the secretory vesicle lumen. It localises to the cell projection. Its subcellular location is the neuron projection. Its function is as follows. Stimulates the release of gastrin and other gastrointestinal hormones. Contributes to the perception of prurient stimuli and to the transmission of itch signals in the spinal cord that promote scratching behavior. Contributes primarily to nonhistaminergic itch sensation. In one study, shown to act in the amygdala as part of an inhibitory network which inhibits memory specifically related to learned fear. In another study, shown to act on vasoactive intestinal peptide (VIP)-expressing cells in the auditory cortex, most likely via extrasynaptic diffusion from local and long-range sources, to mediate disinhibition of glutamatergic cells via VIP cell-specific GRPR signaling which leads to enhanced auditory fear memories. Contributes to the regulation of food intake. Inhibits voltage-gated sodium channels but enhances voltage-gated potassium channels in hippocampal neurons. Induces sighing by acting directly on the pre-Botzinger complex, a cluster of several thousand neurons in the ventrolateral medulla responsible for inspiration during respiratory activity. In terms of biological role, induces an itch response through activation of receptors present on mast cells, triggering mast cell degranulation. This chain is Gastrin-releasing peptide (GRP), found in Homo sapiens (Human).